We begin with the raw amino-acid sequence, 210 residues long: Probable high-affinity nitrate transporter-activating protein 2.2 (210 aa).

A signal peptide spans Met1–Gly23. The helical transmembrane segment at Ile182 to Val202 threads the bilayer.

This sequence belongs to the NAR2 family.

The protein localises to the cell membrane. Its function is as follows. Involved in nitrate transport. The polypeptide is Probable high-affinity nitrate transporter-activating protein 2.2 (NAR2.2) (Oryza sativa subsp. japonica (Rice)).